A 149-amino-acid chain; its full sequence is Calmodulin (149 aa).

The residue at position 2 (Ala2) is an N-acetylalanine. 4 consecutive EF-hand domains span residues 8–43 (EQIA…LGQN), 44–79 (PTEA…KMKD), 81–116 (DSEE…LGEK), and 117–149 (LTDE…MMAK). Residues Asp21, Asp23, Asp25, Cys27, Glu32, Asp57, Asp59, Asn61, Thr63, Glu68, Asp94, Asp96, Asn98, and Glu105 each contribute to the Ca(2+) site. At Lys116 the chain carries N6,N6,N6-trimethyllysine. Residues Asp130, Asp132, Asp134, Gln136, and Glu141 each coordinate Ca(2+).

This sequence belongs to the calmodulin family.

In terms of biological role, calmodulin mediates the control of a large number of enzymes, ion channels and other proteins by Ca(2+). Among the enzymes to be stimulated by the calmodulin-Ca(2+) complex are a number of protein kinases and phosphatases. The protein is Calmodulin (CALM1) of Zea mays (Maize).